A 279-amino-acid chain; its full sequence is 4-deoxy-L-threo-5-hexosulose-uronate ketol-isomerase (279 aa).

Histidine 197, histidine 199, glutamate 204, and histidine 246 together coordinate Zn(2+).

Belongs to the KduI family. It depends on Zn(2+) as a cofactor.

The catalysed reaction is 5-dehydro-4-deoxy-D-glucuronate = 3-deoxy-D-glycero-2,5-hexodiulosonate. Its pathway is glycan metabolism; pectin degradation; 2-dehydro-3-deoxy-D-gluconate from pectin: step 4/5. In terms of biological role, catalyzes the isomerization of 5-dehydro-4-deoxy-D-glucuronate to 3-deoxy-D-glycero-2,5-hexodiulosonate. The sequence is that of 4-deoxy-L-threo-5-hexosulose-uronate ketol-isomerase from Kineococcus radiotolerans (strain ATCC BAA-149 / DSM 14245 / SRS30216).